The chain runs to 136 residues: Large-conductance mechanosensitive channel (136 aa).

2 helical membrane passes run 9–29 (AFAS…GAAF) and 79–99 (IQTI…VKAI).

The protein belongs to the MscL family. As to quaternary structure, homopentamer.

It localises to the cell inner membrane. Functionally, channel that opens in response to stretch forces in the membrane lipid bilayer. May participate in the regulation of osmotic pressure changes within the cell. This Shewanella baltica (strain OS223) protein is Large-conductance mechanosensitive channel.